Consider the following 482-residue polypeptide: MVTTAEKTNIGYITQIIGPVVDVKFPGGKLPQIYNALKIVGTNESGQEINITVEVQQLLGDNQVRTVAMSSTEGLVRGFEVTDTGAPITVPVGKATLGRIFNVLGEPVDNRGPVNAEASLPIHRSAPKFTDLETKPSVFETGIKVVDLLTPYRRGGKIGLFGGAGVGKTVIMMELINNIATQHGGVSVFAGVGERTREGNDLYNEMIESGVINNENLNESKIALVYGQMNEPPGARMRVGLSGLTVAEYFRDVNKQDVLLFIDNIFRFVQAGSEVSALLGRMPSAVGYQPTLGTDVGELQERITSTTEGSITSIQAVYVPADDLTDPAPATTFAHLDGTTVLSRGLAAKGIYPAVDPLGSTSTMLQPNIVGDEHYNTARAVQSTLQRYKELQDIIAILGLDELSEEDRLIVARARKVERFLSQPFFVAEVFTGSPGKYVKLEDTIKGFQKILSGELDALPEQAFYLVGDINEAIAKAEKIKG.

162–169 (GGAGVGKT) provides a ligand contact to ATP.

This sequence belongs to the ATPase alpha/beta chains family. In terms of assembly, F-type ATPases have 2 components, CF(1) - the catalytic core - and CF(0) - the membrane proton channel. CF(1) has five subunits: alpha(3), beta(3), gamma(1), delta(1), epsilon(1). CF(0) has four main subunits: a(1), b(1), b'(1) and c(9-12).

The protein localises to the cellular thylakoid membrane. It carries out the reaction ATP + H2O + 4 H(+)(in) = ADP + phosphate + 5 H(+)(out). In terms of biological role, produces ATP from ADP in the presence of a proton gradient across the membrane. The catalytic sites are hosted primarily by the beta subunits. In Nostoc punctiforme (strain ATCC 29133 / PCC 73102), this protein is ATP synthase subunit beta.